The primary structure comprises 308 residues: Elongation factor Ts (308 aa).

Positions 80-83 (TDFV) are involved in Mg(2+) ion dislocation from EF-Tu.

It belongs to the EF-Ts family.

The protein resides in the cytoplasm. Functionally, associates with the EF-Tu.GDP complex and induces the exchange of GDP to GTP. It remains bound to the aminoacyl-tRNA.EF-Tu.GTP complex up to the GTP hydrolysis stage on the ribosome. This is Elongation factor Ts from Verminephrobacter eiseniae (strain EF01-2).